A 276-amino-acid polypeptide reads, in one-letter code: NADH-cytochrome b5 reductase 2 (276 aa).

In terms of domain architecture, FAD-binding FR-type spans 15 to 127 (EAKYPLPLIE…RGPTGRLFYN (113 aa)). Lys17 bears the N6-acetyllysine mark. Tyr18 is modified (phosphotyrosine). FAD is bound by residues 107 to 137 (ENMKIGDTILFRGPTGRLFYNEPGTLLIKTD) and 146 to 181 (LVHHLGMIAGGTGITPMLQLIRHITKDTSDGTRMSL).

This sequence belongs to the flavoprotein pyridine nucleotide cytochrome reductase family. FAD serves as cofactor.

It catalyses the reaction 2 Fe(III)-[cytochrome b5] + NADH = 2 Fe(II)-[cytochrome b5] + NAD(+) + H(+). NADH-cytochrome b5 reductases are involved in desaturation and elongation of fatty acids, cholesterol biosynthesis, drug metabolism, and, in erythrocyte, methemoglobin reduction. Responsible for NADH-dependent lucigenin chemiluminescence in spermatozoa by reducing both lucigenin and 2-[4-iodophenyl]-3-[4-nitrophenyl]-5-[2,4-disulfophenyl]-2H tetrazolium monosodium salt (WST-1). In Rattus norvegicus (Rat), this protein is NADH-cytochrome b5 reductase 2 (Cyb5r2).